The chain runs to 229 residues: Orotidine 5'-phosphate decarboxylase (229 aa).

Residues Asp12, Lys34, 61–70, Thr116, Arg177, Gln186, Gly206, and Arg207 contribute to the substrate site; that span reads DWKLHDIGAT. Catalysis depends on Lys63, which acts as the Proton donor.

The protein belongs to the OMP decarboxylase family. Type 1 subfamily. As to quaternary structure, homodimer.

It carries out the reaction orotidine 5'-phosphate + H(+) = UMP + CO2. It functions in the pathway pyrimidine metabolism; UMP biosynthesis via de novo pathway; UMP from orotate: step 2/2. Catalyzes the decarboxylation of orotidine 5'-monophosphate (OMP) to uridine 5'-monophosphate (UMP). The chain is Orotidine 5'-phosphate decarboxylase from Caulobacter sp. (strain K31).